Consider the following 240-residue polypeptide: TATA-box-binding protein (240 aa).

The tract at residues 21–61 (NTRQVWENQNRDGTKPATTFQSEEDIKRAAPESEKDTSATS) is disordered. The span at 44 to 57 (EDIKRAAPESEKDT) shows a compositional bias: basic and acidic residues. 2 repeat units span residues 67-143 (LQNI…ARII) and 157-234 (IQNI…YPVL).

It belongs to the TBP family. As to quaternary structure, binds DNA as monomer. The 1.2 MDa TFIID complex is composed of TATA binding protein (TBP) and the 14 TBP-associated factors. One copy of each TAF1, TAF2, TAF3, TAF7, TAF8, TAF11, TAF13, two copies of each TAF4, TAF5, TAF6, TAF9, TAF10, TAF12, and three copies of TAF14. Interacts with TFC8.

Its subcellular location is the nucleus. General transcription factor that functions at the core of the DNA-binding general transcription factor complex TFIID. Binding of TFIID to a promoter (with or without TATA element) is the initial step in preinitiation complex (PIC) formation. TFIID plays a key role in the regulation of gene expression by RNA polymerase II through different activities such as transcription activator interaction, core promoter recognition and selectivity, TFIIA and TFIIB interaction, chromatin modification (histone acetylation by TAF1), facilitation of DNA opening and initiation of transcription. The chain is TATA-box-binding protein (SPT15) from Saccharomyces cerevisiae (strain ATCC 204508 / S288c) (Baker's yeast).